An 89-amino-acid polypeptide reads, in one-letter code: MEKDKSLITFLEMLDTAMAQRMLADLSDHERRSPQLYNAINKLLDRHKFQIGKLQPDVHILGGLAGALEEYKEKVGDNGLTDDDIYTLQ.

The tract at residues 1 to 48 (MEKDKSLITFLEMLDTAMAQRMLADLSDHERRSPQLYNAINKLLDRHK) is helix-turn-helix (HTH).

The protein belongs to the terminase small subunit family. As to quaternary structure, homooctamer. Interacts with the terminase large subunit gp19; the active complex is probably heterooligomeric.

Plays a role in packaging a single copy of genome into the prohead. The terminase is composed of two subunits (a large and a small) and the small subunit recognizes a specific sequence in the viral DNA. Once the DNA is packaged, the terminase detaches from the connector and the tail replaces it to finish maturation of the virion. Packaging initiates by TerS recognizing the packaging sequence in the viral DNA. The nuclease activity of TerL cuts the viral DNA and the terminase-DNA complex binds to the portal of a procapsid shell. DNA is translocated into the capsid, powered by the packaging ATPase in TerL, which continues until the next site is encountered at which point the motor stops and again cuts the DNA to release the nucleocapsid filled with a unit-length genome ('unit length' packaging). Direct short terminal repeats at each end of the genome are duplicated in concert with packaging. This Escherichia coli (Bacteriophage T7) protein is Terminase, small subunit gp18.